Here is a 150-residue protein sequence, read N- to C-terminus: Transmembrane protein PMIS2 (150 aa).

A compositionally biased stretch (low complexity) spans 1–12 (MALKPPSATQPA). The segment at 1–61 (MALKPPSATQ…EPQEPTQTPE (61 aa)) is disordered. Pro residues predominate over residues 13–22 (PNAPATPDAP). Residues 23–61 (PTTGDPGASAAPGSPTTTGGPGAPAEVPQEPQEPTQTPE) show a composition bias toward low complexity. The next 2 helical transmembrane spans lie at 71-91 (LCLT…ALYF) and 130-150 (GWFG…LVLY).

This sequence belongs to the CD225/Dispanin family.

It localises to the membrane. In terms of biological role, may play a role in spermatozoa mobility. This Homo sapiens (Human) protein is Transmembrane protein PMIS2.